The chain runs to 193 residues: Imidazoleglycerol-phosphate dehydratase (193 aa).

Belongs to the imidazoleglycerol-phosphate dehydratase family.

The protein localises to the cytoplasm. It catalyses the reaction D-erythro-1-(imidazol-4-yl)glycerol 3-phosphate = 3-(imidazol-4-yl)-2-oxopropyl phosphate + H2O. Its pathway is amino-acid biosynthesis; L-histidine biosynthesis; L-histidine from 5-phospho-alpha-D-ribose 1-diphosphate: step 6/9. The chain is Imidazoleglycerol-phosphate dehydratase from Saccharolobus islandicus (strain Y.N.15.51 / Yellowstone #2) (Sulfolobus islandicus).